Consider the following 323-residue polypeptide: Ribonuclease Z (323 aa).

The Zn(2+) site is built by histidine 62, histidine 64, aspartate 66, histidine 67, histidine 144, aspartate 215, and histidine 273. The active-site Proton acceptor is the aspartate 66.

This sequence belongs to the RNase Z family. As to quaternary structure, homodimer. Zn(2+) is required as a cofactor.

The catalysed reaction is Endonucleolytic cleavage of RNA, removing extra 3' nucleotides from tRNA precursor, generating 3' termini of tRNAs. A 3'-hydroxy group is left at the tRNA terminus and a 5'-phosphoryl group is left at the trailer molecule.. Functionally, zinc phosphodiesterase, which displays some tRNA 3'-processing endonuclease activity. Probably involved in tRNA maturation, by removing a 3'-trailer from precursor tRNA. The protein is Ribonuclease Z of Synechococcus sp. (strain WH7803).